The primary structure comprises 319 residues: 4-hydroxy-3-methylbut-2-enyl diphosphate reductase (319 aa).

Cys12 lines the [4Fe-4S] cluster pocket. Residues His41 and His74 each contribute to the (2E)-4-hydroxy-3-methylbut-2-enyl diphosphate site. Dimethylallyl diphosphate-binding residues include His41 and His74. Positions 41 and 74 each coordinate isopentenyl diphosphate. Cys97 contacts [4Fe-4S] cluster. Residue His125 participates in (2E)-4-hydroxy-3-methylbut-2-enyl diphosphate binding. Position 125 (His125) interacts with dimethylallyl diphosphate. Residue His125 coordinates isopentenyl diphosphate. Glu127 serves as the catalytic Proton donor. Thr168 provides a ligand contact to (2E)-4-hydroxy-3-methylbut-2-enyl diphosphate. Residue Cys198 coordinates [4Fe-4S] cluster. (2E)-4-hydroxy-3-methylbut-2-enyl diphosphate contacts are provided by Ser226, Ser227, Asn228, and Ser270. Dimethylallyl diphosphate is bound by residues Ser226, Ser227, Asn228, and Ser270. 4 residues coordinate isopentenyl diphosphate: Ser226, Ser227, Asn228, and Ser270.

This sequence belongs to the IspH family. In terms of assembly, homodimer. Requires [4Fe-4S] cluster as cofactor.

It carries out the reaction isopentenyl diphosphate + 2 oxidized [2Fe-2S]-[ferredoxin] + H2O = (2E)-4-hydroxy-3-methylbut-2-enyl diphosphate + 2 reduced [2Fe-2S]-[ferredoxin] + 2 H(+). The catalysed reaction is dimethylallyl diphosphate + 2 oxidized [2Fe-2S]-[ferredoxin] + H2O = (2E)-4-hydroxy-3-methylbut-2-enyl diphosphate + 2 reduced [2Fe-2S]-[ferredoxin] + 2 H(+). It functions in the pathway isoprenoid biosynthesis; dimethylallyl diphosphate biosynthesis; dimethylallyl diphosphate from (2E)-4-hydroxy-3-methylbutenyl diphosphate: step 1/1. It participates in isoprenoid biosynthesis; isopentenyl diphosphate biosynthesis via DXP pathway; isopentenyl diphosphate from 1-deoxy-D-xylulose 5-phosphate: step 6/6. Its function is as follows. Catalyzes the conversion of 1-hydroxy-2-methyl-2-(E)-butenyl 4-diphosphate (HMBPP) into a mixture of isopentenyl diphosphate (IPP) and dimethylallyl diphosphate (DMAPP). Acts in the terminal step of the DOXP/MEP pathway for isoprenoid precursor biosynthesis. This is 4-hydroxy-3-methylbut-2-enyl diphosphate reductase from Hamiltonella defensa subsp. Acyrthosiphon pisum (strain 5AT).